The sequence spans 283 residues: Nicotine 6-hydroxylase medium subunit (283 aa).

Residues 1-176 (MKLPAIRYAS…TDVWIPSRPN (176 aa)) enclose the FAD-binding PCMH-type domain. FAD contacts are provided by residues 31–35 (AGGQS) and 110–114 (TLGGS).

In terms of assembly, heterotrimer composed of a large subunit (NdhL), a medium subunit (NdhM) and a small subunit (NdhS). The cofactor is FAD.

The protein resides in the cytoplasm. The enzyme catalyses (R)-nicotine + A + H2O = (R)-6-hydroxynicotine + AH2. The catalysed reaction is (S)-nicotine + A + H2O = (S)-6-hydroxynicotine + AH2. The protein operates within alkaloid degradation; nicotine degradation; 6-hydroxypseudooxynicotine from nicotine (R-isomer route): step 1/2. Its pathway is alkaloid degradation; nicotine degradation; 6-hydroxypseudooxynicotine from nicotine (S-isomer route): step 1/2. Its activity is regulated as follows. Nicotine dehydrogenase activity is inhibited by tungsten. Functionally, component of the nicotine 6-hydroxylase, which is involved in the degradation of nicotine. Catalyzes the hydroxylation of the pyridine ring at C6 to form 6-hydroxynicotine. Can use both L-nicotine and D-nicotine. This is Nicotine 6-hydroxylase medium subunit from Paenarthrobacter nicotinovorans (Arthrobacter nicotinovorans).